The chain runs to 683 residues: Phosphomethylpyrimidine synthase (683 aa).

Substrate-binding positions include N235, M264, Y293, H329, 349 to 351, 390 to 393, and E429; these read SRG and DGMR. H433 provides a ligand contact to Zn(2+). A substrate-binding site is contributed by Y456. H497 provides a ligand contact to Zn(2+). Residues C577, C580, and C585 each coordinate [4Fe-4S] cluster. The disordered stretch occupies residues 647-683; it reads RQSPGVESTSLESTSLESTVLESTSLESTALEKAKEV. Residues 653-675 show a composition bias toward low complexity; sequence ESTSLESTSLESTVLESTSLEST.

The protein belongs to the ThiC family. In terms of assembly, homodimer. The cofactor is [4Fe-4S] cluster.

It carries out the reaction 5-amino-1-(5-phospho-beta-D-ribosyl)imidazole + S-adenosyl-L-methionine = 4-amino-2-methyl-5-(phosphooxymethyl)pyrimidine + CO + 5'-deoxyadenosine + formate + L-methionine + 3 H(+). The protein operates within cofactor biosynthesis; thiamine diphosphate biosynthesis. Functionally, catalyzes the synthesis of the hydroxymethylpyrimidine phosphate (HMP-P) moiety of thiamine from aminoimidazole ribotide (AIR) in a radical S-adenosyl-L-methionine (SAM)-dependent reaction. The chain is Phosphomethylpyrimidine synthase from Shewanella loihica (strain ATCC BAA-1088 / PV-4).